A 237-amino-acid chain; its full sequence is Ribonuclease PH (237 aa).

Phosphate is bound by residues Arg86 and 124–126 (GTR).

This sequence belongs to the RNase PH family. As to quaternary structure, homohexameric ring arranged as a trimer of dimers.

It catalyses the reaction tRNA(n+1) + phosphate = tRNA(n) + a ribonucleoside 5'-diphosphate. Functionally, phosphorolytic 3'-5' exoribonuclease that plays an important role in tRNA 3'-end maturation. Removes nucleotide residues following the 3'-CCA terminus of tRNAs; can also add nucleotides to the ends of RNA molecules by using nucleoside diphosphates as substrates, but this may not be physiologically important. Probably plays a role in initiation of 16S rRNA degradation (leading to ribosome degradation) during starvation. The chain is Ribonuclease PH from Bradyrhizobium sp. (strain BTAi1 / ATCC BAA-1182).